We begin with the raw amino-acid sequence, 69 residues long: DNA gyrase inhibitor YacG (69 aa).

Residues C9, C12, C28, and C32 each contribute to the Zn(2+) site. The tract at residues 48 to 69 (PVSPDAEDELFSGDLEAPHRGH) is disordered.

This sequence belongs to the DNA gyrase inhibitor YacG family. Interacts with GyrB. The cofactor is Zn(2+).

Its function is as follows. Inhibits all the catalytic activities of DNA gyrase by preventing its interaction with DNA. Acts by binding directly to the C-terminal domain of GyrB, which probably disrupts DNA binding by the gyrase. The polypeptide is DNA gyrase inhibitor YacG (Pseudomonas syringae pv. syringae (strain B728a)).